Here is a 158-residue protein sequence, read N- to C-terminus: SsrA-binding protein (158 aa).

It belongs to the SmpB family.

Its subcellular location is the cytoplasm. Functionally, required for rescue of stalled ribosomes mediated by trans-translation. Binds to transfer-messenger RNA (tmRNA), required for stable association of tmRNA with ribosomes. tmRNA and SmpB together mimic tRNA shape, replacing the anticodon stem-loop with SmpB. tmRNA is encoded by the ssrA gene; the 2 termini fold to resemble tRNA(Ala) and it encodes a 'tag peptide', a short internal open reading frame. During trans-translation Ala-aminoacylated tmRNA acts like a tRNA, entering the A-site of stalled ribosomes, displacing the stalled mRNA. The ribosome then switches to translate the ORF on the tmRNA; the nascent peptide is terminated with the 'tag peptide' encoded by the tmRNA and targeted for degradation. The ribosome is freed to recommence translation, which seems to be the essential function of trans-translation. This chain is SsrA-binding protein, found in Glaesserella parasuis serovar 5 (strain SH0165) (Haemophilus parasuis).